A 680-amino-acid chain; its full sequence is DNA-directed RNA polymerase subunit beta' (680 aa).

Zn(2+) contacts are provided by cysteine 69, cysteine 71, cysteine 87, and cysteine 90. Residues aspartate 489, aspartate 491, and aspartate 493 each coordinate Mg(2+).

This sequence belongs to the RNA polymerase beta' chain family. RpoC1 subfamily. In plastids the minimal PEP RNA polymerase catalytic core is composed of four subunits: alpha, beta, beta', and beta''. When a (nuclear-encoded) sigma factor is associated with the core the holoenzyme is formed, which can initiate transcription. The cofactor is Mg(2+). Requires Zn(2+) as cofactor.

It is found in the plastid. The protein localises to the chloroplast. It carries out the reaction RNA(n) + a ribonucleoside 5'-triphosphate = RNA(n+1) + diphosphate. In terms of biological role, DNA-dependent RNA polymerase catalyzes the transcription of DNA into RNA using the four ribonucleoside triphosphates as substrates. The polypeptide is DNA-directed RNA polymerase subunit beta' (Ceratophyllum demersum (Rigid hornwort)).